Reading from the N-terminus, the 430-residue chain is Probable aspartic-type endopeptidase ARB_07403 (430 aa).

The N-terminal stretch at 1-17 (MHVSTLLVAVLLPLALS) is a signal peptide. The propeptide at 18-87 (KPTPRKKTGS…SKATAGSGKE (70 aa)) is activation peptide. Positions 66 to 105 (YHPQHISKLPGNSKATAGSGKEGVESQDEKGEVVNNPTNH) are disordered. Over residues 87 to 97 (EGVESQDEKGE) the composition is skewed to basic and acidic residues. A Peptidase A1 domain is found at 109–427 (FLSPVTIGGQ…DQRGPSISLA (319 aa)). Residue aspartate 125 is part of the active site. A glycan (N-linked (GlcNAc...) asparagine) is linked at asparagine 306. Aspartate 314 is a catalytic residue.

The protein belongs to the peptidase A1 family.

It is found in the secreted. In terms of biological role, probable secreted aspartic-type endopeptidase which contributes to virulence. The polypeptide is Probable aspartic-type endopeptidase ARB_07403 (Arthroderma benhamiae (strain ATCC MYA-4681 / CBS 112371) (Trichophyton mentagrophytes)).